The sequence spans 468 residues: O-methyltransferase lcsG (468 aa).

A compositionally biased stretch (polar residues) spans Met-1 to Ala-12. A disordered region spans residues Met-1–Ser-29. S-adenosyl-L-methionine contacts are provided by residues Gly-298–Gly-299, Asp-321, Asp-348–Phe-349, and Lys-363.

It belongs to the class I-like SAM-binding methyltransferase superfamily. Cation-independent O-methyltransferase family.

Its pathway is secondary metabolite biosynthesis. O-methyltransferase; part of the gene cluster that mediates the biosynthesis of the lipopeptide antibiotics leucinostatins that show extensive biological activities, including antimalarial, antiviral, antibacterial, antifungal, and antitumor activities, as well as phytotoxic. Leucinostatin A contains nine amino acid residues, including the unusual amino acid 4-methyl-L-proline (MePro), 2-amino-6-hydroxy-4-methyl-8-oxodecanoic acid (AHyMeOA), 3-hydroxyleucine (HyLeu), alpha-aminoisobutyric acid (AIB), beta-Ala, a 4-methylhex-2-enoic acid at the N-terminus as well as a N1,N1-dimethylpropane-1,2-diamine (DPD) at the C-terminus. The biosynthesis of leucinostatins is probably initiated with the assembly of 4-methylhex-2-enoic acid by a reducing PKS. Two reducing polyketide synthases, lcsB and lcsC, have been identified in the cluster and it is not clear which is the one that assembles 4-methylhex-2-enoic acid since both contain KS, AT, DH, cMT, ER, KR and ACP domains. The polyketide residue might be transferred to the NRPS lcsA, mediated by two additional enzymes, the acyl-CoA ligase lcsD and the thioesterase lcsE. The linear polyketide carboxylic acid, which is released from PKS, is converted to a CoA thioester by lcsD, and then lcsE hydrolyzes the thiol bond and shuttles the polyketide intermediate to lcsA. The C domain of the first module catalyzed the condensation of 4-methylhex-2-enoic acid and MePro carried by domain A1, followed by successive condensations of nine amino acids to trigger the elongation of the linear peptide. A5 and A6 domains of lcsA are proposed to incorporate leucine, A2 AHyMeOA, and A3 incorporates HyLeu. A4, A7 and A8 incorporate AIB. The AHyMeOA in leucinostatin A activated by the A2 might be produced by the second PKS (lcsB or lcsC) present within the cluster. The MePro is probably produced via leucine cyclization and may originate from a separate pathway, independent of the cluster. Another nonproteinogenic amino acid, beta-Ala, could be produced by an aspartic acid decarboxylase also localized outside of the cluster. Two candidates are VFPBJ_01400 and VFPBJ_10476. The final peptide scaffold may be released by the NAD(P)H-dependent thioester reductase (TE) at the C-terminal region of lcsA. Transamination of the lcsA product by the transaminase lcsP may produce DPD at the C-terminus. Further hydroxylation steps performed alternatively by the cytochrome P450 monooxygenases lcsI, lcsK and lcsN then yield the non-methylated leucinostatins precursor. It is also possible that leucines can be hydroxylated prior to their incorporation into the peptide. Varying extents of methylation then lead to the formation of leucinostatins A and B. This chain is O-methyltransferase lcsG, found in Purpureocillium lilacinum (Paecilomyces lilacinus).